A 194-amino-acid chain; its full sequence is Large ribosomal subunit protein eL15 (194 aa).

Residues 168-194 (RSRGLLNKGKGAEKVRPSIRAHQGKGK) are disordered. The span at 184–194 (PSIRAHQGKGK) shows a compositional bias: basic residues.

Belongs to the eukaryotic ribosomal protein eL15 family. As to quaternary structure, part of the 50S ribosomal subunit.

This chain is Large ribosomal subunit protein eL15, found in Thermococcus kodakarensis (strain ATCC BAA-918 / JCM 12380 / KOD1) (Pyrococcus kodakaraensis (strain KOD1)).